The sequence spans 545 residues: Probable sucrose-6-phosphate hydrolase (545 aa).

Substrate-binding positions include 107-110 (LLND), glutamine 126, 169-170 (FS), 230-231 (RD), and glutamate 285. Residue aspartate 110 is part of the active site.

This sequence belongs to the glycosyl hydrolase 32 family.

Its subcellular location is the cytoplasm. It carries out the reaction Hydrolysis of terminal non-reducing beta-D-fructofuranoside residues in beta-D-fructofuranosides.. It participates in glycan biosynthesis; sucrose metabolism. Functionally, enables the bacterium to metabolize sucrose as a sole carbon source. The polypeptide is Probable sucrose-6-phosphate hydrolase (Psychromonas ingrahamii (strain DSM 17664 / CCUG 51855 / 37)).